The following is a 237-amino-acid chain: Phosphoadenosine 5'-phosphosulfate reductase (237 aa).

Residue Cys231 is the Nucleophile; cysteine thiosulfonate intermediate of the active site.

It belongs to the PAPS reductase family. CysH subfamily.

It is found in the cytoplasm. The enzyme catalyses [thioredoxin]-disulfide + sulfite + adenosine 3',5'-bisphosphate + 2 H(+) = [thioredoxin]-dithiol + 3'-phosphoadenylyl sulfate. Its pathway is sulfur metabolism; hydrogen sulfide biosynthesis; sulfite from sulfate: step 3/3. Functionally, catalyzes the formation of sulfite from phosphoadenosine 5'-phosphosulfate (PAPS) using thioredoxin as an electron donor. This chain is Phosphoadenosine 5'-phosphosulfate reductase, found in Xylella fastidiosa (strain M12).